The primary structure comprises 363 residues: Phospho-N-acetylmuramoyl-pentapeptide-transferase (363 aa).

10 consecutive transmembrane segments (helical) span residues 27-47 (SGCA…PFIA), 76-96 (TMGG…WADL), 97-117 (TNGF…VGFA), 137-157 (LGCE…LTPP), 171-191 (VLLP…TGFG), 202-222 (GLAI…SYLV), 242-262 (LAVF…FNAP), 265-285 (AVFM…AVAV), 292-312 (VLCI…IQIF), and 340-360 (KIVI…LATL).

The protein belongs to the glycosyltransferase 4 family. MraY subfamily. Mg(2+) serves as cofactor.

Its subcellular location is the cell inner membrane. The enzyme catalyses UDP-N-acetyl-alpha-D-muramoyl-L-alanyl-gamma-D-glutamyl-meso-2,6-diaminopimeloyl-D-alanyl-D-alanine + di-trans,octa-cis-undecaprenyl phosphate = di-trans,octa-cis-undecaprenyl diphospho-N-acetyl-alpha-D-muramoyl-L-alanyl-D-glutamyl-meso-2,6-diaminopimeloyl-D-alanyl-D-alanine + UMP. It participates in cell wall biogenesis; peptidoglycan biosynthesis. Catalyzes the initial step of the lipid cycle reactions in the biosynthesis of the cell wall peptidoglycan: transfers peptidoglycan precursor phospho-MurNAc-pentapeptide from UDP-MurNAc-pentapeptide onto the lipid carrier undecaprenyl phosphate, yielding undecaprenyl-pyrophosphoryl-MurNAc-pentapeptide, known as lipid I. The polypeptide is Phospho-N-acetylmuramoyl-pentapeptide-transferase (Gluconobacter oxydans (strain 621H) (Gluconobacter suboxydans)).